A 1106-amino-acid polypeptide reads, in one-letter code: Protein kinase C (1106 aa).

One can recognise an REM-1 1 domain in the interval 1 to 67 (MDGDDLIASV…MRELQLRQMK (67 aa)). The tract at residues 65–138 (QMKQEGASPT…PRPFAPVPKA (74 aa)) is disordered. The span at 79 to 93 (PPNPDGSAPVPPPKD) shows a compositional bias: pro residues. One can recognise an REM-1 2 domain in the interval 149 to 226 (KYDTPYLGPK…LKRYEDLHVD (78 aa)). Positions 232–350 (APDDESLSTP…MRRKKIESEF (119 aa)) constitute a C2 domain. Residues 361–370 (MEHGAAHGRQ) show a composition bias toward basic and acidic residues. Residues 361 to 400 (MEHGAAHGRQDAGGAPGSSNRPPSGGHSGGPGQGYAGGAP) form a disordered region. Over residues 386-400 (GHSGGPGQGYAGGAP) the composition is skewed to gly residues. 2 consecutive Phorbol-ester/DAG-type zinc fingers follow at residues 460 to 508 (GHKF…VTKC) and 528 to 578 (PHRF…PDFC). Composition is skewed to polar residues over residues 600 to 609 (KSASVSSGLS) and 658 to 668 (YIPPQSPTAAQ). 2 disordered regions span residues 600-625 (KSAS…PQDN) and 658-719 (YIPP…HAHY). The span at 683–693 (AAAAAAAAAAA) shows a compositional bias: low complexity. The Protein kinase domain occupies 781-1040 (FNFLAVLGKG…AQEVMSHAFF (260 aa)). Residues 787–795 (LGKGNFGKV) and Lys810 each bind ATP. The active-site Proton acceptor is Asp906. The 66-residue stretch at 1041–1106 (RNINWDDIYH…RGFSYTADFA (66 aa)) folds into the AGC-kinase C-terminal domain. Thr1082 carries the phosphothreonine modification. The residue at position 1100 (Ser1100) is a Phosphoserine. Tyr1101 carries the post-translational modification Phosphotyrosine.

The protein belongs to the protein kinase superfamily. AGC Ser/Thr protein kinase family. PKC subfamily. Interacts with hsp90.

The catalysed reaction is L-seryl-[protein] + ATP = O-phospho-L-seryl-[protein] + ADP + H(+). It carries out the reaction L-threonyl-[protein] + ATP = O-phospho-L-threonyl-[protein] + ADP + H(+). Protein kinase C; part of cell wall integrity (CWI) signaling pathway composed of pkcA, the bck1-mkk2-mpka MAPK cascade and the downstream rlmA transcription regulator. The CWI signaling pathway regulates cell wall integrity and pyomelanin formation. CWI also controls oxidative stress response, gliotoxin production, iron adaptation and asexual development. Finally, CWI is constitutively required for A.fumigatus to cope with the temperature increase found in the mammalian lung environment, during infection. Modulates the expression of fumiquinazoline cluster during conidiogenesis. This chain is Protein kinase C, found in Aspergillus fumigatus (strain ATCC MYA-4609 / CBS 101355 / FGSC A1100 / Af293) (Neosartorya fumigata).